The following is a 226-amino-acid chain: Neuron-specific vesicular protein calcyon (226 aa).

The interval 1-23 (MVKLGCSFSGKPGKETGDQDGAA) is disordered. The Extracellular portion of the chain corresponds to 1–88 (MVKLGCSFSG…EEGRRLPTAR (88 aa)). Residues 89-109 (MIAFAMALLGCVLIMYKAIWY) form a helical membrane-spanning segment. At 110–226 (DQFTCPDGFL…AEDVPSQSPK (117 aa)) the chain is on the cytoplasmic side. Residues 189 to 226 (TAAAAAAAEGNEPSGKPLDMREKEDPQKAEDVPSQSPK) are disordered. Positions 206–219 (LDMREKEDPQKAED) are enriched in basic and acidic residues.

It belongs to the NSG family. As to quaternary structure, interacts with CLTA. Expressed exclusively in neurons (at protein level). In all age groups, expressed at significantly higher levels in the medial prefrontal and orbital frontal cortices of spontaneously hypertensive rats (SHR), a model of attention deficit-hyperactivity disorder, than Wistar Kyoto (WKY) animals. In the motor cortex, dorsal striatum and nucleus accumbens, expression is significantly elevated in SHR only in younger animals.

The protein resides in the cytoplasmic vesicle membrane. It localises to the cell membrane. Interacts with clathrin light chain A and stimulates clathrin self-assembly and clathrin-mediated endocytosis. The sequence is that of Neuron-specific vesicular protein calcyon (Caly) from Rattus norvegicus (Rat).